An 853-amino-acid polypeptide reads, in one-letter code: Bromodomain-containing protein bet-1 (853 aa).

The span at 1–19 shows a compositional bias: polar residues; sequence MSEGSGDQSQQRPWASPRQ. Disordered stretches follow at residues 1–22 and 141–245; these read MSEG…QQPI and SLEQ…LRAK. Residues 39–145 enclose the Bromo 1 domain; the sequence is RHTNKLDYIM…EVIKKSLEQA (107 aa). The span at 141 to 153 shows a compositional bias: basic and acidic residues; sequence SLEQAPREEHDMD. 2 stretches are compositionally biased toward low complexity: residues 166–175 and 192–215; these read SDGGSKSSSS and SEVS…SVAA. Lys-252 is covalently cross-linked (Glycyl lysine isopeptide (Lys-Gly) (interchain with G-Cter in SUMO)). In terms of domain architecture, Bromo 2 spans 257–366; sequence QPLLPSMKPC…EVFDRRWAEL (110 aa). Residues 369–381 show a composition bias toward low complexity; the sequence is SSSRASSVAPQSA. Residues 369-418 are disordered; the sequence is SSSRASSVAPQSAPIAPTPKVAKSSAPKEPKESRKEHKKETTFEASGAKS. Basic and acidic residues predominate over residues 394 to 410; sequence APKEPKESRKEHKKETT. A coiled-coil region spans residues 419–458; the sequence is EDLMQINNALSMIREREEKLKAELAAAQAIKDKLTSVKNR. The NET domain maps to 516 to 601; the sequence is DSDDEDNKMA…TIPTLNGNGD (86 aa). Disordered regions lie at residues 594–814 and 819–838; these read PTLN…DEQT and MRME…VSLS. Low complexity predominate over residues 612–624; sequence TSSGATGSKGSSS. The segment covering 684–696 has biased composition (polar residues); it reads QPPSTSREWNQSS. Positions 708-736 are enriched in low complexity; it reads QPPMSRVPASSSTSVSAIGKNNAAASSNS. The segment covering 786–807 has biased composition (polar residues); the sequence is QFFQSQPTTSATIRSPTESQPG. The span at 819-832 shows a compositional bias: basic and acidic residues; the sequence is MRMEAKRARQKEDE.

It belongs to the BET family. Interacts with acetylated histone H4. Interacts (via BROMO domain 2) with smo-1 and ubc-9. As to expression, expressed in T-cells, Q-cells, V5-cells and their descendants such as somatic gonad and syncytium.

It localises to the nucleus. It is found in the chromosome. Its function is as follows. Required for the establishment and maintenance of stable cell fate in several lineages including V5.pa, T, Z1/Z4 and QR lineages probably by repressing the expression of cell fate determinants. Required to maintain non-distal tip cell (DTC) fate of somatic gonadal cells through the htz-1-mediated repression of transcription factor ceh-22. Regulates the subnuclear localization of histone variant htz-1 in somatic gonadal cells. Plays a role in the attenuation of the let-60/ras pathway, probably by preventing expression of activators of the pathway. Involved in adult locomotion. Acts together with the sumoylation pathway to prevent muscle myosin depletion in aging adults probably by preventing myoblast growth factor receptor egl-15 overexpression. May play a role in vulva development. The polypeptide is Bromodomain-containing protein bet-1 (Caenorhabditis elegans).